The chain runs to 186 residues: ATP synthase subunit delta (186 aa).

It belongs to the ATPase delta chain family. In terms of assembly, F-type ATPases have 2 components, F(1) - the catalytic core - and F(0) - the membrane proton channel. F(1) has five subunits: alpha(3), beta(3), gamma(1), delta(1), epsilon(1). CF(0) has four main subunits: a(1), b(1), b'(1) and c(10-14). The alpha and beta chains form an alternating ring which encloses part of the gamma chain. F(1) is attached to F(0) by a central stalk formed by the gamma and epsilon chains, while a peripheral stalk is formed by the delta, b and b' chains.

It is found in the cell inner membrane. In terms of biological role, f(1)F(0) ATP synthase produces ATP from ADP in the presence of a proton or sodium gradient. F-type ATPases consist of two structural domains, F(1) containing the extramembraneous catalytic core and F(0) containing the membrane proton channel, linked together by a central stalk and a peripheral stalk. During catalysis, ATP synthesis in the catalytic domain of F(1) is coupled via a rotary mechanism of the central stalk subunits to proton translocation. This protein is part of the stalk that links CF(0) to CF(1). It either transmits conformational changes from CF(0) to CF(1) or is implicated in proton conduction. The protein is ATP synthase subunit delta of Dinoroseobacter shibae (strain DSM 16493 / NCIMB 14021 / DFL 12).